A 514-amino-acid chain; its full sequence is 2-isopropylmalate synthase (514 aa).

Residues 5 to 268 enclose the Pyruvate carboxyltransferase domain; the sequence is LIIFDTTLRD…DVGLDTTQIV (264 aa). Positions 14, 202, 204, and 239 each coordinate Mn(2+). The interval 395-514 is regulatory domain; the sequence is KFVSLSQRSE…KDDKLNPQRS (120 aa).

This sequence belongs to the alpha-IPM synthase/homocitrate synthase family. LeuA type 1 subfamily. In terms of assembly, homodimer. It depends on Mn(2+) as a cofactor.

It localises to the cytoplasm. The enzyme catalyses 3-methyl-2-oxobutanoate + acetyl-CoA + H2O = (2S)-2-isopropylmalate + CoA + H(+). Its pathway is amino-acid biosynthesis; L-leucine biosynthesis; L-leucine from 3-methyl-2-oxobutanoate: step 1/4. Its function is as follows. Catalyzes the condensation of the acetyl group of acetyl-CoA with 3-methyl-2-oxobutanoate (2-ketoisovalerate) to form 3-carboxy-3-hydroxy-4-methylpentanoate (2-isopropylmalate). This Burkholderia ambifaria (strain MC40-6) protein is 2-isopropylmalate synthase.